Reading from the N-terminus, the 309-residue chain is Chronophin (309 aa).

Residue aspartate 25 is the Nucleophile of the active site. The Mg(2+) site is built by aspartate 25 and aspartate 27. Aspartate 27 acts as the Proton donor in catalysis. Substrate-binding positions include 58–60 (SNN), histidine 178, and lysine 209. Aspartate 234 contributes to the Mg(2+) binding site.

The protein belongs to the HAD-like hydrolase superfamily. In terms of assembly, homodimer. The cofactor is Mg(2+).

It is found in the cytoplasm. The protein localises to the cytosol. Its subcellular location is the cytoskeleton. The protein resides in the cell projection. It localises to the ruffle membrane. It is found in the lamellipodium membrane. The protein localises to the cell membrane. It carries out the reaction pyridoxal 5'-phosphate + H2O = pyridoxal + phosphate. The catalysed reaction is pyridoxine 5'-phosphate + H2O = pyridoxine + phosphate. It catalyses the reaction pyridoxamine + phosphate = pyridoxamine 5'-phosphate + H2O. The enzyme catalyses O-phospho-L-seryl-[protein] + H2O = L-seryl-[protein] + phosphate. In terms of biological role, functions as a pyridoxal phosphate (PLP) phosphatase, which also catalyzes the dephosphorylation of pyridoxine 5'-phosphate (PNP) and pyridoxamine 5'-phosphate (PMP), with order of substrate preference PLP &gt; PNP &gt; PMP and therefore plays a role in vitamin B6 metabolism. Also functions as a protein serine phosphatase that specifically dephosphorylates 'Ser-3' in proteins of the actin-depolymerizing factor (ADF)/cofilin family like CFL1 and DSTN. Thereby, regulates cofilin-dependent actin cytoskeleton reorganization, being required for normal progress through mitosis and normal cytokinesis. Does not dephosphorylate phosphothreonines in LIMK1. Does not dephosphorylate peptides containing phosphotyrosine. This Rattus norvegicus (Rat) protein is Chronophin.